A 500-amino-acid chain; its full sequence is ATP synthase subunit beta (500 aa).

157–164 (GGAGVGKT) contributes to the ATP binding site.

It belongs to the ATPase alpha/beta chains family. F-type ATPases have 2 components, CF(1) - the catalytic core - and CF(0) - the membrane proton channel. CF(1) has five subunits: alpha(3), beta(3), gamma(1), delta(1), epsilon(1). CF(0) has three main subunits: a(1), b(2) and c(9-12). The alpha and beta chains form an alternating ring which encloses part of the gamma chain. CF(1) is attached to CF(0) by a central stalk formed by the gamma and epsilon chains, while a peripheral stalk is formed by the delta and b chains.

Its subcellular location is the cell inner membrane. The catalysed reaction is ATP + H2O + 4 H(+)(in) = ADP + phosphate + 5 H(+)(out). Functionally, produces ATP from ADP in the presence of a proton gradient across the membrane. The catalytic sites are hosted primarily by the beta subunits. The protein is ATP synthase subunit beta of Salinibacter ruber (strain DSM 13855 / M31).